The sequence spans 134 residues: MATNVKKVKKLRPKNVTVGIAHIHSSHQNTIISFTDKQGNVISWASSGSVGFKGTKKKTAYAATLATAAAAQKAREHGIREVIVELKGTGQGKEAARKQIITSGLNILLTKDVTPVPHNGTRPPRKWFKRQEKR.

The tract at residues 114 to 134 is disordered; the sequence is TPVPHNGTRPPRKWFKRQEKR. Basic residues predominate over residues 123–134; the sequence is PPRKWFKRQEKR.

This sequence belongs to the universal ribosomal protein uS11 family. As to quaternary structure, part of the 30S ribosomal subunit. Interacts with proteins S7 and S18. Binds to IF-3.

Functionally, located on the platform of the 30S subunit, it bridges several disparate RNA helices of the 16S rRNA. Forms part of the Shine-Dalgarno cleft in the 70S ribosome. This Mesomycoplasma hyopneumoniae (strain J / ATCC 25934 / NCTC 10110) (Mycoplasma hyopneumoniae) protein is Small ribosomal subunit protein uS11.